The primary structure comprises 389 residues: MGIKGLMKLLQEEAPSCIKEVEKMSALAGHAVAIDASMALYQFLIAIRSADGGGPSQALTNADGEVTSHLQGMFSRTIRMMENGLKPVYVFDGKPPVMKSGELAKRSDRRQEAQKALEEATEKGNAEDIDRFNKRLVRATPQHNEDCKELLRLMGVPHITAPCEAEASCAALAKGGRVYAAGTEDMDALTFGVPVLYRRLTVSPAKKIPILEIRLERALQELEMTHEQFVDLCILCGCDYCDSIRGVGPKKAYAGIKEHKSIENFLEVLQKNKSKGVVIPDEWLGENPIYKNAREMFIKPEVVDAKETEIKWRDPQETELVDFLVKKHGFQEDRVLSAITRLKKSKSTQSQKRLDSFFTVMPSANGAKKRKAPAAKGGKKAATAKKGKK.

Residues 1–110 (MGIKGLMKLL…GELAKRSDRR (110 aa)) form an N-domain region. Position 35 (Asp-35) interacts with Mg(2+). The DNA site is built by Arg-48 and Arg-76. Asp-92 contributes to the Mg(2+) binding site. Positions 103–124 (LAKRSDRRQEAQKALEEATEKG) are disordered. Positions 128 to 259 (DIDRFNKRLV…KKAYAGIKEH (132 aa)) are I-domain. Mg(2+) contacts are provided by Glu-164, Glu-166, Asp-185, and Asp-187. A DNA-binding site is contributed by Glu-164. 2 residues coordinate DNA: Gly-237 and Asp-239. Asp-239 provides a ligand contact to Mg(2+). Residues 350-358 (SQKRLDSFF) are interaction with PCNA. Residues 362–389 (PSANGAKKRKAPAAKGGKKAATAKKGKK) form a disordered region. The span at 367–389 (AKKRKAPAAKGGKKAATAKKGKK) shows a compositional bias: basic residues.

It belongs to the XPG/RAD2 endonuclease family. FEN1 subfamily. In terms of assembly, interacts with PCNA. Three molecules of FEN1 bind to one PCNA trimer with each molecule binding to one PCNA monomer. PCNA stimulates the nuclease activity without altering cleavage specificity. Mg(2+) serves as cofactor. Phosphorylated. Phosphorylation upon DNA damage induces relocalization to the nuclear plasma.

It is found in the nucleus. It localises to the nucleolus. The protein resides in the nucleoplasm. The protein localises to the mitochondrion. Its function is as follows. Structure-specific nuclease with 5'-flap endonuclease and 5'-3' exonuclease activities involved in DNA replication and repair. During DNA replication, cleaves the 5'-overhanging flap structure that is generated by displacement synthesis when DNA polymerase encounters the 5'-end of a downstream Okazaki fragment. It enters the flap from the 5'-end and then tracks to cleave the flap base, leaving a nick for ligation. Also involved in the long patch base excision repair (LP-BER) pathway, by cleaving within the apurinic/apyrimidinic (AP) site-terminated flap. Acts as a genome stabilization factor that prevents flaps from equilibrating into structures that lead to duplications and deletions. Also possesses 5'-3' exonuclease activity on nicked or gapped double-stranded DNA, and exhibits RNase H activity. Also involved in replication and repair of rDNA and in repairing mitochondrial DNA. This chain is Flap endonuclease 1, found in Phytophthora infestans (strain T30-4) (Potato late blight agent).